We begin with the raw amino-acid sequence, 427 residues long: MTKVEKNGIGKRICVIGLGYIGLPTASMLAIQGFDVIGVDINEKRVKEIKELSFKTTEKDLMTLVKGAINSGNLKVQTKPEKADVFIICVPTPCIECDGEKKCDLTYLNKAIESIKPYLENGNLIIIESTIPPGTTDDIYKKLSKDKKIYVAHCPERVLPGSILKELVENDRVIGGVDEKSAEMAKEIYETFVTGKIYLTDAKTAEMVKLMENTYRDVNIALANEFAKIAEEIGINVWEAIELANKHPRVNILKPGPGVGGHCISIDPWFIVEKSKNAKLIRTARELNDSMPLFVVEKIKKIIKKDIGKVAIFGVTYKGNVDDTRESPAEKVVSKLIDEGFEVKCYDKYARDFIYPLNSLDEAVEGADIIVILAEHDEYKNFDKEDIKNIASKVKNKIILDTKNILNRELWEKEGFKVYVLGDGKNA.

NAD(+) contacts are provided by tyrosine 20, isoleucine 21, aspartate 40, arginine 45, threonine 92, and threonine 130. Residues arginine 157, valine 158, lysine 209, asparagine 213, arginine 216, histidine 247, arginine 249, and glycine 260 each coordinate UDP-N-acetyl-alpha-D-mannosaminouronate. The Proton donor/acceptor role is filled by lysine 209. The active-site Nucleophile is the cysteine 263. Positions 317 and 318 each coordinate UDP-N-acetyl-alpha-D-mannosaminouronate. Arginine 325 contributes to the NAD(+) binding site. A UDP-N-acetyl-alpha-D-mannosaminouronate-binding site is contributed by lysine 403.

This sequence belongs to the UDP-glucose/GDP-mannose dehydrogenase family. Homotetramer; probably dimer of dimers.

It catalyses the reaction UDP-N-acetyl-alpha-D-mannosamine + 2 NAD(+) + H2O = UDP-N-acetyl-alpha-D-mannosaminouronate + 2 NADH + 3 H(+). Its function is as follows. Catalyzes the four-electron oxidation of UDP-N-acetyl-D-mannosamine (UDP-ManNAc), reducing NAD(+) and releasing UDP-N-acetylmannosaminuronic acid (UDP-ManNAcA). The protein is UDP-N-acetyl-D-mannosamine dehydrogenase (wecC) of Methanocaldococcus jannaschii (strain ATCC 43067 / DSM 2661 / JAL-1 / JCM 10045 / NBRC 100440) (Methanococcus jannaschii).